A 493-amino-acid polypeptide reads, in one-letter code: UDP-N-acetylmuramoyl-L-alanyl-D-glutamate--L-lysine ligase (493 aa).

Ser30 provides a ligand contact to UDP-N-acetyl-alpha-D-muramoyl-L-alanyl-D-glutamate. 110–116 lines the ATP pocket; the sequence is GTNGKTS. Residues Asn151, 152–153, Ser179, and Arg187 contribute to the UDP-N-acetyl-alpha-D-muramoyl-L-alanyl-D-glutamate site; that span reads TT. An N6-carboxylysine modification is found at Lys219. Residues 406–409 carry the L-lysine recognition motif motif; it reads DNPA.

The protein belongs to the MurCDEF family. MurE subfamily. Mg(2+) serves as cofactor. In terms of processing, carboxylation is probably crucial for Mg(2+) binding and, consequently, for the gamma-phosphate positioning of ATP.

It is found in the cytoplasm. The enzyme catalyses UDP-N-acetyl-alpha-D-muramoyl-L-alanyl-D-glutamate + L-lysine + ATP = UDP-N-acetyl-alpha-D-muramoyl-L-alanyl-gamma-D-glutamyl-L-lysine + ADP + phosphate + H(+). The protein operates within cell wall biogenesis; peptidoglycan biosynthesis. In terms of biological role, catalyzes the addition of L-lysine to the nucleotide precursor UDP-N-acetylmuramoyl-L-alanyl-D-glutamate (UMAG) in the biosynthesis of bacterial cell-wall peptidoglycan. Cannot use diaminopimelate as substrate. Can accept L-ornithine as substrate, but the efficiency is 400-fold lower than that with L-lysine. Seems to have a role in beta-lactam antibiotic resistance. This is UDP-N-acetylmuramoyl-L-alanyl-D-glutamate--L-lysine ligase from Staphylococcus aureus (strain NCTC 8325 / PS 47).